The sequence spans 610 residues: MVALLIFLGIFTCVETLPLSDSPSSYIPEEVPSSQTADIGLPPPTEFTLPNEDDEILIRKLNIQKTRKEILYGPSLIGKTSFFISGPLGDQISQRDQTLWSRDAAPVVQAVSHDAAAALHDIQIHGGLQNLDDYKILYQGHWSSSVPGGIAKGQFSNFTSDLLFSMERLSTNPYILRRLHPHADELPFAVDSKIVQKLTGSTLPSLHKAGRLFLADHSYQKDYVAQEGRYAAACQALFYLDDRCHQFLPLAIKTNVGSNLTYTPLDEPNDWLLAKVMFNVNDLFHGQMYHLASTHAVAEIVHLAALRTMSSRHPVLALLQRLMYQAYAIRPIGNNILFNPGGLIDQNSVFSNVAVRKFATDFYPTVAGPVRSNYFEANLRSRGLLNATHGPDLPHFPFYEDGARIIKVIRTFIQSFVKSIYKSDKVLAKDWELQAWIAEANGAAEVIDFPPTPLKKRKHLVDILTHMAWLTGVSHHVLNQGEPVTTSGVLPLHPGSLYAPVPGEKGVVDSLLPWLPNEQKSVDQISFLALFNRPQIVENNRTLRYMFNSESLLAGTVRAVAAANERFMEEMGHISQEISNRKFDDDGLSQGMPFIWTGMDPGVIPFYLSV.

Residues 1–16 form the signal peptide; the sequence is MVALLIFLGIFTCVET. One can recognise a Lipoxygenase domain in the interval 47–610; the sequence is FTLPNEDDEI…PGVIPFYLSV (564 aa). N-linked (GlcNAc...) asparagine glycans are attached at residues asparagine 157 and asparagine 259. Histidine 290 and histidine 295 together coordinate Mn(2+). N-linked (GlcNAc...) asparagine glycosylation occurs at asparagine 386. Histidine 475 and asparagine 479 together coordinate Mn(2+). Residue asparagine 540 is glycosylated (N-linked (GlcNAc...) asparagine). Residue valine 610 participates in Mn(2+) binding.

Belongs to the lipoxygenase family. Manganese lipoxygenase subfamily. It depends on Mn(2+) as a cofactor. Post-translationally, N- and O-glycosylated.

It localises to the secreted. It catalyses the reaction (9Z,12Z)-octadecadienoate + O2 = (11S)-hydroperoxy-(9Z,12Z)-octadecadienoate. The enzyme catalyses (9Z,12Z)-octadecadienoate + O2 = (11R)-hydroperoxy-(9Z,12Z)-octadecadienoate. It carries out the reaction (9Z,12Z)-octadecadienoate + O2 = (13S)-hydroperoxy-(9Z,11E)-octadecadienoate. The catalysed reaction is (9Z,12Z,15Z)-octadecatrienoate + O2 = (11S)-hydroperoxy-(9Z,12Z,15Z)-octadecatrienoate. Its function is as follows. Lipoxygenase that metabolizes linoleic and alpha-linolenic acids to 9-, 11- and 13-hydroperoxy fatty acids. Oxidizes linoleic acid to mainly 11R-, 13S- and racemic 9-HPODE, and alpha-linolenic acid to 11-HPOTrE. The protein is Manganese lipoxygenase of Fusarium oxysporum (strain Fo5176) (Fusarium vascular wilt).